Consider the following 61-residue polypeptide: Conotoxin Bt5.1 (61 aa).

The signal sequence occupies residues 1 to 22; that stretch reads MRGLPVFVILLLLIASEPSVDA. Positions 23–48 are excised as a propeptide; that stretch reads RPKTKADVPLTSLNDNAKRTLQILRN.

This sequence belongs to the conotoxin T superfamily. In terms of processing, contains 2 disulfide bonds that can be either 'C1-C3, C2-C4' or 'C1-C4, C2-C3', since these disulfide connectivities have been observed for conotoxins with cysteine framework V (for examples, see AC P0DQQ7 and AC P81755). As to expression, expressed by the venom duct.

It is found in the secreted. The sequence is that of Conotoxin Bt5.1 from Conus betulinus (Beech cone).